The sequence spans 100 residues: MIREERLLKVLRAPHISEKATMSAEKSNTIVFKVAKDATKKEIKAAVEKLFEVEVKSVNTLIIKGKTKRQGLRQGRRSDVKKAYVTLNEGQDLDFVGGAE.

The protein belongs to the universal ribosomal protein uL23 family. As to quaternary structure, part of the 50S ribosomal subunit. Contacts protein L29, and trigger factor when it is bound to the ribosome.

Functionally, one of the early assembly proteins it binds 23S rRNA. One of the proteins that surrounds the polypeptide exit tunnel on the outside of the ribosome. Forms the main docking site for trigger factor binding to the ribosome. This Vibrio cholerae serotype O1 (strain ATCC 39541 / Classical Ogawa 395 / O395) protein is Large ribosomal subunit protein uL23.